Reading from the N-terminus, the 555-residue chain is Tetracycline 7-halogenase (555 aa).

22-27 contacts FAD; the sequence is GSGLSG.

It belongs to the flavin-dependent halogenase family. Bacterial tryptophan halogenase subfamily. In terms of assembly, homodimer.

The catalysed reaction is tetracycline + FADH2 + chloride + O2 = 7-chlorotetracycline + FAD + 2 H2O + H(+). It functions in the pathway antibiotic biosynthesis. In terms of biological role, involved in the biosynthesis of chlorotetracycline (CTC), an important member from antibiotics tetracycline (TC) family, which inhibits protein synthesis in bacteria and is widely involved in clinical therapy, animal feeds and aquaculture. Utilizes FADH(2) supplied by the flavin reductase CtcQ, to catalyze the chlorination of tetracycline (TC) at C7 position, leading to the production of 7-chlorotetracycline. The enzyme forms a lysine chloramine intermediate on an internal lysine residue before transferring the chlorine to the substrate. It is stereo-selective for the 4S (natural) isomer of tetracycline. The sequence is that of Tetracycline 7-halogenase from Kitasatospora aureofaciens (Streptomyces aureofaciens).